The chain runs to 369 residues: Methylthioribose-1-phosphate isomerase (369 aa).

Residues 54–56 (RGA), Arg-95, and Gln-208 contribute to the substrate site. Catalysis depends on Asp-249, which acts as the Proton donor. Substrate is bound at residue 259–260 (NK).

Belongs to the eIF-2B alpha/beta/delta subunits family. MtnA subfamily.

It carries out the reaction 5-(methylsulfanyl)-alpha-D-ribose 1-phosphate = 5-(methylsulfanyl)-D-ribulose 1-phosphate. The protein operates within amino-acid biosynthesis; L-methionine biosynthesis via salvage pathway; L-methionine from S-methyl-5-thio-alpha-D-ribose 1-phosphate: step 1/6. In terms of biological role, catalyzes the interconversion of methylthioribose-1-phosphate (MTR-1-P) into methylthioribulose-1-phosphate (MTRu-1-P). The protein is Methylthioribose-1-phosphate isomerase of Desulfosudis oleivorans (strain DSM 6200 / JCM 39069 / Hxd3) (Desulfococcus oleovorans).